Reading from the N-terminus, the 477-residue chain is MSPQTETKASVGFKAGVKDYKLTYYTPEYETKDTDILAAFRVTPQPGVPPEEAGAAVAAESSTGTWTTVWTDGLTSLDRYKGRCYHIEPVVGEDNQYIAYVAYPLDLFEEGSVTNMFTSIVGNVFGFKALRALRLEDLRIPPTYSKTFQGPPHGIQVERDKLNKYGRPLLGCTIKPKLGLSAKNYGRACYECLRGGLDFTKDDENVNSQPFMRWRDRFVFCAEAIYKSQAETGEIKGHYLNATAGTCEEMIKRAVFARELGVPIVMHDYLTGGFTANTSLAHYCRDNGLLLHIHRAMHAVIDRQKNHGMHFRVLAKALRMSGGDHIHAGTVVGKLEGEREMTLGFVDLLRDDFIEKDRARGIFFTQDWVSMPGVIPVASGGIHVWHMPALTEIFGDDSVLQFGGGTLGHPWGNAPGAAANRVALEACVQARNEGRDLAREGNEIIRSACKWSPELAAACEIWKAIKFEFEPVDKLDS.

Residues 1–2 (MS) constitute a propeptide that is removed on maturation. N-acetylproline is present on Pro-3. Lys-14 is modified (N6,N6,N6-trimethyllysine). Substrate contacts are provided by Asn-123 and Thr-173. The active-site Proton acceptor is Lys-175. Lys-177 is a binding site for substrate. Mg(2+)-binding residues include Lys-201, Asp-203, and Glu-204. The residue at position 201 (Lys-201) is an N6-carboxylysine. The active-site Proton acceptor is His-294. Substrate-binding residues include Arg-295, His-327, and Ser-379.

It belongs to the RuBisCO large chain family. Type I subfamily. Heterohexadecamer of 8 large chains and 8 small chains; disulfide-linked. The disulfide link is formed within the large subunit homodimers. Mg(2+) is required as a cofactor. Post-translationally, the disulfide bond which can form in the large chain dimeric partners within the hexadecamer appears to be associated with oxidative stress and protein turnover.

It localises to the plastid. The protein localises to the chloroplast. It carries out the reaction 2 (2R)-3-phosphoglycerate + 2 H(+) = D-ribulose 1,5-bisphosphate + CO2 + H2O. The catalysed reaction is D-ribulose 1,5-bisphosphate + O2 = 2-phosphoglycolate + (2R)-3-phosphoglycerate + 2 H(+). Its function is as follows. RuBisCO catalyzes two reactions: the carboxylation of D-ribulose 1,5-bisphosphate, the primary event in carbon dioxide fixation, as well as the oxidative fragmentation of the pentose substrate in the photorespiration process. Both reactions occur simultaneously and in competition at the same active site. The polypeptide is Ribulose bisphosphate carboxylase large chain (Oryza nivara (Indian wild rice)).